The chain runs to 101 residues: Urease subunit beta (101 aa).

This sequence belongs to the urease beta subunit family. Heterotrimer of UreA (gamma), UreB (beta) and UreC (alpha) subunits. Three heterotrimers associate to form the active enzyme.

The protein localises to the cytoplasm. The catalysed reaction is urea + 2 H2O + H(+) = hydrogencarbonate + 2 NH4(+). Its pathway is nitrogen metabolism; urea degradation; CO(2) and NH(3) from urea (urease route): step 1/1. The sequence is that of Urease subunit beta from Rhizobium rhizogenes (strain K84 / ATCC BAA-868) (Agrobacterium radiobacter).